A 416-amino-acid chain; its full sequence is Probable pectate lyase 8 (416 aa).

A signal peptide spans 1–24; sequence MAVTKLILFASALLLTALFIGVNA. 3 N-linked (GlcNAc...) asparagine glycosylation sites follow: Asn23, Asn28, and Asn52. Ca(2+)-binding residues include Asp214, Asp238, and Asp242. The active site involves Arg294.

It belongs to the polysaccharide lyase 1 family. The cofactor is Ca(2+).

The enzyme catalyses Eliminative cleavage of (1-&gt;4)-alpha-D-galacturonan to give oligosaccharides with 4-deoxy-alpha-D-galact-4-enuronosyl groups at their non-reducing ends.. Its pathway is glycan metabolism; pectin degradation; 2-dehydro-3-deoxy-D-gluconate from pectin: step 2/5. The chain is Probable pectate lyase 8 from Arabidopsis thaliana (Mouse-ear cress).